The following is a 35-amino-acid chain: Conotoxin Cal6.1f (35 aa).

The propeptide occupies 1 to 8 (GLIRPSKR). 3 cysteine pairs are disulfide-bonded: Cys9/Cys25, Cys16/Cys29, and Cys24/Cys34.

This sequence belongs to the conotoxin O1 superfamily. In terms of tissue distribution, expressed by the venom duct.

The protein localises to the secreted. Functionally, probable neurotoxin with unknown target. Possibly targets ion channels. The chain is Conotoxin Cal6.1f from Californiconus californicus (California cone).